The sequence spans 593 residues: Glutamate decarboxylase 1 (593 aa).

Positions 1–12 (MASSTPSPATSS) are enriched in low complexity. The disordered stretch occupies residues 1–22 (MASSTPSPATSSNAGADPNTTN). S77 carries the phosphoserine modification. A 4-aminobutanoate-binding site is contributed by 189–191 (QLS). At K404 the chain carries N6-(pyridoxal phosphate)lysine. R566 is a binding site for 4-aminobutanoate.

Belongs to the group II decarboxylase family. Homodimer. It depends on pyridoxal 5'-phosphate as a cofactor.

The enzyme catalyses L-glutamate + H(+) = 4-aminobutanoate + CO2. Functionally, catalyzes the synthesis of the inhibitory neurotransmitter gamma-aminobutyric acid (GABA) with pyridoxal 5'-phosphate as cofactor. The chain is Glutamate decarboxylase 1 (Gad1) from Mus musculus (Mouse).